Consider the following 408-residue polypeptide: Peptidase T (408 aa).

His78 contacts Zn(2+). Asp80 is an active-site residue. Residue Asp140 participates in Zn(2+) binding. The active-site Proton acceptor is Glu173. Residues Glu174, Asp196, and His379 each contribute to the Zn(2+) site.

This sequence belongs to the peptidase M20B family. The cofactor is Zn(2+).

It is found in the cytoplasm. The enzyme catalyses Release of the N-terminal residue from a tripeptide.. In terms of biological role, cleaves the N-terminal amino acid of tripeptides. The chain is Peptidase T from Citrobacter koseri (strain ATCC BAA-895 / CDC 4225-83 / SGSC4696).